We begin with the raw amino-acid sequence, 396 residues long: NADH-quinone oxidoreductase subunit D (396 aa).

It belongs to the complex I 49 kDa subunit family. NDH-1 is composed of 14 different subunits. Subunits NuoB, C, D, E, F, and G constitute the peripheral sector of the complex.

The protein resides in the cell inner membrane. It catalyses the reaction a quinone + NADH + 5 H(+)(in) = a quinol + NAD(+) + 4 H(+)(out). Its function is as follows. NDH-1 shuttles electrons from NADH, via FMN and iron-sulfur (Fe-S) centers, to quinones in the respiratory chain. The immediate electron acceptor for the enzyme in this species is believed to be ubiquinone. Couples the redox reaction to proton translocation (for every two electrons transferred, four hydrogen ions are translocated across the cytoplasmic membrane), and thus conserves the redox energy in a proton gradient. The sequence is that of NADH-quinone oxidoreductase subunit D from Methylobacterium radiotolerans (strain ATCC 27329 / DSM 1819 / JCM 2831 / NBRC 15690 / NCIMB 10815 / 0-1).